Reading from the N-terminus, the 96-residue chain is Co-chaperonin GroES (96 aa).

The protein belongs to the GroES chaperonin family. As to quaternary structure, heptamer of 7 subunits arranged in a ring. Interacts with the chaperonin GroEL.

It localises to the cytoplasm. Together with the chaperonin GroEL, plays an essential role in assisting protein folding. The GroEL-GroES system forms a nano-cage that allows encapsulation of the non-native substrate proteins and provides a physical environment optimized to promote and accelerate protein folding. GroES binds to the apical surface of the GroEL ring, thereby capping the opening of the GroEL channel. This chain is Co-chaperonin GroES, found in Geotalea daltonii (strain DSM 22248 / JCM 15807 / FRC-32) (Geobacter daltonii).